The following is a 477-amino-acid chain: Zinc metalloproteinase/disintegrin (477 aa).

The N-terminal stretch at 1 to 19 (MIQVLLVIICLAVPYQGSS) is a signal peptide. The propeptide occupies 20–186 (IILESGNVND…PIKKASQSNL (167 aa)). The Peptidase M12B domain occupies 192–388 (RYIELVIVAD…QKPQCILNKP (197 aa)). Positions 195 and 279 each coordinate Ca(2+). 3 disulfide bridges follow: Cys-303-Cys-383, Cys-343-Cys-367, and Cys-345-Cys-350. His-328 is a binding site for Zn(2+). Residue Glu-329 is part of the active site. The Zn(2+) site is built by His-332 and His-338. Positions 383 and 386 each coordinate Ca(2+). Positions 389 to 404 (LRTDTVSTPVSGNELL) are excised as a propeptide. In terms of domain architecture, Disintegrin spans 396-477 (TPVSGNELLE…AGCPRNPFHA (82 aa)). 6 disulfides stabilise this stretch: Cys-410/Cys-425, Cys-412/Cys-420, Cys-419/Cys-442, Cys-433/Cys-439, Cys-438/Cys-463, and Cys-451/Cys-470. The short motif at 455–457 (RGD) is the Cell attachment site element.

This sequence belongs to the venom metalloproteinase (M12B) family. P-II subfamily. P-IIa sub-subfamily. As to quaternary structure, monomer. Zn(2+) serves as cofactor. As to expression, expressed by the venom gland.

It is found in the secreted. Its function is as follows. Impairs hemostasis in the envenomed animal. Inhibits platelet aggregation induced by ADP, thrombin, platelet-activating factor and collagen. Acts by inhibiting fibrinogen interaction with platelet receptors GPIIb/GPIIIa (ITGA2B/ITGB3). This Gloydius halys (Chinese water mocassin) protein is Zinc metalloproteinase/disintegrin.